Reading from the N-terminus, the 178-residue chain is FXYD domain-containing ion transport regulator 5 (178 aa).

A signal peptide spans 1 to 21 (MSLSSRLCLLTIVALILPSRG). Positions 21–59 (GQTPKKPTSIFTADQTSATTRDNVPDPDQTSPGVQTTPL) are enriched in polar residues. The segment at 21 to 130 (GQTPKKPTSI…SYIEHPLDSN (110 aa)) is disordered. At 22 to 145 (QTPKKPTSIF…YYDDTTLRKR (124 aa)) the chain is on the extracellular side. Low complexity predominate over residues 67–79 (TGSQTAAQTETQQ). Polar residues predominate over residues 80 to 100 (LTKMATSNPVSDPGPHTSSKK). A helical transmembrane segment spans residues 146 to 166 (GLLVAAVLFITGIIILTSGKC). Residues 167–178 (RQLSQFCLNRHR) are Cytoplasmic-facing.

It belongs to the FXYD family. Regulatory subunit of the sodium/potassium-transporting ATPase which is composed of a catalytic alpha subunit, a non-catalytic beta subunit and an additional regulatory subunit. The regulatory subunit, a member of the FXYD protein family, modulates the enzymatic activity in a tissue- and isoform-specific way by changing affinities of the Na+/K+-ATPase toward Na(+), K(+) or ATP. Post-translationally, glycosylated. As to expression, expressed mainly in epithelial tissue, such as lung, intestine and kidney. Not detected in brain, liver, muscle, and heart.

Its subcellular location is the cell membrane. It is found in the basolateral cell membrane. Associates with and regulates the activity of the sodium/potassium-transporting ATPase (NKA) which catalyzes the hydrolysis of ATP coupled with the exchange of Na(+) and K(+) ions across the plasma membrane. May increase NKA activity by increasing the apparent affinity for Na(+). Involved in down-regulation of E-cadherin which results in reduced cell adhesion. Promotes metastasis. The protein is FXYD domain-containing ion transport regulator 5 (Fxyd5) of Mus musculus (Mouse).